Here is a 396-residue protein sequence, read N- to C-terminus: Trypacidin cluster transcription factor (396 aa).

The zn(2)-C6 fungal-type DNA-binding region spans 20 to 47 (CRACGLSKVRCSKEKPTCSRCRRRGTVC). Disordered stretches follow at residues 54 to 120 (RPGR…LSTV), 190 to 218 (DPAP…ESEA), and 346 to 365 (MHGA…PAPL). Residues 57–71 (RKPDSRSEVEPEPGH) are compositionally biased toward basic and acidic residues. The span at 72–82 (LSHPLPSPESS) shows a compositional bias: low complexity.

In terms of tissue distribution, specifically expressed in conidia.

Its subcellular location is the nucleus. Its function is as follows. Transcription factor that regulates the expression of the gene clusters that mediate the biosynthesis of trypacidin, a metabolite with antiprotozoal activity and a possible role in the infection process. Trypacidin is toxic for human pulmonary and bronchial epithelial cells by initiating the intracellular formation of nitric oxide (NO) and hydrogen peroxide (H(2)O(2)), thus triggering host necrotic cell death. The polypeptide is Trypacidin cluster transcription factor (Aspergillus fumigatus (strain ATCC MYA-4609 / CBS 101355 / FGSC A1100 / Af293) (Neosartorya fumigata)).